We begin with the raw amino-acid sequence, 353 residues long: MARTVSLWRREAVFLTAMLATETGVVGISTLFKVATSKGLNLYAFLGYSYLLASLLLLPSLFFTDRSRSLPPLSLSILSKIGLLGLLGSMYVITGYIGIEYSSPTLASAISNITPALTFILAIIFRMEKVSFKERSSVAKVMGTILSLIGALVVVLYHGPRVFVASSPPYINFRQLSPPLSSSNSDWLIGGALLTIRDIFVSVSFILQAKIMSTYPAAFTVSFLYIVSVSIVTSMIGLVVEKNNPSVWIIRFDITLITIVTMAIITSVYYVIHSWTVRHKGPLYLAIFKPLSILIAVVMSAVFLNDSLYLGCLIGGLLITLGFYAVMWGKANEEKDQLLLVSGKERTPLLLNG.

Transmembrane regions (helical) follow at residues 12–32, 43–63, 81–101, 105–125, 137–157, 187–207, 219–239, 252–272, 283–303, and 308–328; these read AVFLTAMLATETGVVGISTLF, YAFLGYSYLLASLLLLPSLFF, IGLLGLLGSMYVITGYIGIEY, TLASAISNITPALTFILAIIF, SVAKVMGTILSLIGALVVVLY, WLIGGALLTIRDIFVSVSFIL, FTVSFLYIVSVSIVTSMIGLV, FDITLITIVTMAIITSVYYVI, LYLAIFKPLSILIAVVMSAVF, and LYLGCLIGGLLITLGFYAVMW. In terms of domain architecture, EamA spans 27–155; that stretch reads GISTLFKVAT…LSLIGALVVV (129 aa).

This sequence belongs to the drug/metabolite transporter (DMT) superfamily. Plant drug/metabolite exporter (P-DME) (TC 2.A.7.4) family.

It localises to the membrane. This chain is WAT1-related protein At3g28100, found in Arabidopsis thaliana (Mouse-ear cress).